The primary structure comprises 1525 residues: Multidrug resistance protein mrp-7 (1525 aa).

The Extracellular portion of the chain corresponds to 1–24 (MLSSFCGDGHPFSTGLPNVSICAQ). N-linked (GlcNAc...) asparagine glycosylation is present at Asn18. A helical transmembrane segment spans residues 25 to 45 (HTVLVWVPAAFFLLTLPFLSA). Over 46–66 (QCHLTAQRFARLPFSAHFIIK) the chain is Cytoplasmic. A helical membrane pass occupies residues 67–87 (LLLVAFLAANSLATWCYVLFS). The Extracellular portion of the chain corresponds to 88 to 94 (KNSYAAA). Residues 95–115 (YYVYPGLWVLVWTGTFLVHLI) traverse the membrane as a helical segment. The Cytoplasmic portion of the chain corresponds to 116-118 (RLR). Residues 119–139 (CGLVSSGIQHVTSLIFLLCGA) form a helical membrane-spanning segment. Topologically, residues 140–165 (PEFYQWIRMENSNSFPNDLTTTDSAQ) are extracellular. The helical transmembrane segment at 166–186 (FLSIAYLSWYSALILYTFSLC) threads the bilayer. Over 187 to 346 (FADPRGAKTD…APFWKGMALS (160 aa)) the chain is Cytoplasmic. Residues 305–587 (LLASTLKFVS…IALLINQAVQ (283 aa)) enclose the ABC transmembrane type-1 1 domain. A helical membrane pass occupies residues 347-367 (ILMFSVSELRSLILNGYFYIM). At 368 to 434 (FRMGTKIQTS…SCPYQITFAL (67 aa)) the chain is on the extracellular side. A helical membrane pass occupies residues 435-455 (VYLFITLGYSALPGVVIMVIF). At 456-535 (VPMNIISSMI…NILDSFNTAS (80 aa)) the chain is on the cytoplasmic side. A helical transmembrane segment spans residues 536–556 (PFLVALFSFGTFVLSNPSHLL). At 557–561 (TPQIA) the chain is on the extracellular side. A helical transmembrane segment spans residues 562 to 582 (FVSLALFNQLRSPMTMIALLI). Over 583 to 953 (NQAVQAVVSN…ATYQLYVKAA (371 aa)) the chain is Cytoplasmic. The region spanning 622–849 (VRVENLTASW…RGLFFDFMEE (228 aa)) is the ABC transporter 1 domain. 659–666 (GKVGSGKS) is an ATP binding site. Positions 900-925 (ELTTQISTMSSPEKPPTGTSPAAATE) are disordered. A helical transmembrane segment spans residues 954–974 (GYLLSIAFIGFFIVYMTLQIL). Residues 959-1245 (IAFIGFFIVY…AVRQVSEIEA (287 aa)) form the ABC transmembrane type-1 2 domain. Over 975–1005 (RSFWLSAWSDEYDPDSPSAHPMAKGWRLGVY) the chain is Extracellular. A helical transmembrane segment spans residues 1006–1026 (GALGFSETACFFVALLALVFV). At 1027-1068 (GQRASKNLHGPLIHNLMRSPMSFYDTTPLGRILNRCAKDIET) the chain is on the cytoplasmic side. A helical membrane pass occupies residues 1069 to 1089 (IDMMLPMNFRYLVMCVLQVAF). Position 1090 (Thr1090) is a topological domain, extracellular. The chain crosses the membrane as a helical span at residues 1091–1111 (LIVIIISTPLFAVVILPLALI). Residues 1112-1184 (YLIFLRYYVP…RYSSLVSNRW (73 aa)) lie on the Cytoplasmic side of the membrane. Residues 1185 to 1205 (LAVRLEFVGNCIIFFAALFAV) form a helical membrane-spanning segment. The Extracellular portion of the chain corresponds to 1206–1525 (LSKEFGWITS…ADAAEQDKHE (320 aa)). A glycan (N-linked (GlcNAc...) asparagine) is linked at Asn1228. Positions 1282-1516 (VKFDGYSTRY…KNSAFAKMVA (235 aa)) constitute an ABC transporter 2 domain. 1316–1323 (GRTGAGKS) lines the ATP pocket. Asn1358 and Asn1418 each carry an N-linked (GlcNAc...) asparagine glycan.

It belongs to the ABC transporter superfamily. ABCC family. Conjugate transporter (TC 3.A.1.208) subfamily. Expressed in head neurons, including the dopamine (DA) motor neuron, and other cells in the body.

It is found in the cell membrane. Negatively regulates cellular toxicity by mediating the export of environmental toxicants such as methylmercury out of the cell. Plays a role in inhibiting methylmercury-induced dopamine (DA) motor neuron degeneration. Not involved in Mn(2+)- or Al(3+)-associated toxicity. The polypeptide is Multidrug resistance protein mrp-7 (Caenorhabditis elegans).